Here is a 576-residue protein sequence, read N- to C-terminus: MSTLASTRPPPLKLTIPSLEEAEDHAQERRAGGGGQEVGKMHPDCLPLPLVQPGNSPQVREEEEDEQTECEEQLNIEDEEVEEEHDLDLEDPASCCSENSVLSVGQEQSEAAQAALSAQAQARQRLLISQIYRPSAFSSTATTVLPPSEGPPFSPEDLLQLPPSTGTFQEEFLRKSQLYAEELMKQQMHLMAAARVNALTAAAAGKQLQMAMAAAAVATVPSGQDALAQLTATALGLGPGGAVHPHQQLLLQRDQVHHHHHMQNHLNNNENLHERALKFSIDNILKADFGSRLPKIGALSGNIGGGSVSGSSTGSSKNSGNTNGNRSPLKAPKKSGKPLNLAQSNAAANSSLSFSSSLANICSNSNDSNSTATSSSTTNTSGAPVDLVKSPPPAAGAGATGASGKSGEDSGTPIVWPAWVYCTRYSDRPSSGRSPRARKPKKPATSSSAAGGGGGGVEKGEAADGGGVPEDKRPRTAFSGTQLARLKHEFNENRYLTEKRRQQLSGELGLNEAQIKIWFQNKRAKLKKSSGTKNPLALQLMAQGLYNHSTIPLTREEEELQELQEAASAAAAKEPC.

5 disordered regions span residues 1–68 (MSTL…DEQT), 80–102 (EVEEEHDLDLEDPASCCSENSVL), 305–344 (GGSVSGSSTGSSKNSGNTNGNRSPLKAPKKSGKPLNLAQS), 364–410 (NSND…GEDS), and 426–476 (SDRP…RPRT). The segment covering 80-91 (EVEEEHDLDLED) has biased composition (acidic residues). 3 stretches are compositionally biased toward low complexity: residues 309–325 (SGSSTGSSKNSGNTNGN), 364–381 (NSNDSNSTATSSSTTNTS), and 395–405 (AGAGATGASGK). Residues 450-468 (AGGGGGGVEKGEAADGGGV) show a composition bias toward gly residues. Positions 471-530 (DKRPRTAFSGTQLARLKHEFNENRYLTEKRRQQLSGELGLNEAQIKIWFQNKRAKLKKSS) form a DNA-binding region, homeobox.

It belongs to the engrailed homeobox family. As to expression, expressed in row 6/7 of the embryonic neuroectoderm.

The protein localises to the nucleus. Functionally, engrailed (en) and invected (inv) are functionally redundant transcription factors in neuronal precursor cell NB5-3 specification. Inv is unable to substitute for en in other regulatory processes such as maintaining gsb expression in the neuroectoderm after stage 10 of embryogenesis. Maintenance of gsb expression in row 5 of the neuroectoderm involves an as yet unidentified short range signaling molecule. The chain is Homeobox protein invected (inv) from Drosophila melanogaster (Fruit fly).